The primary structure comprises 360 residues: Isocitrate dehydrogenase [NAD] subunit 1, mitochondrial (360 aa).

A mitochondrion-targeting transit peptide spans 1–11 (MLNRTIAKRTL). Arginine 109, arginine 140, and aspartate 228 together coordinate substrate. Aspartate 228 serves as a coordination point for Mg(2+).

The protein belongs to the isocitrate and isopropylmalate dehydrogenases family. Octamer of two non-identical subunits IDH1 and IDH2. Mg(2+) serves as cofactor. Mn(2+) is required as a cofactor.

It is found in the mitochondrion. It catalyses the reaction D-threo-isocitrate + NAD(+) = 2-oxoglutarate + CO2 + NADH. With respect to regulation, allosterically regulated by several compounds including AMP, NAD(+), and citrate. Functionally, performs an essential role in the oxidative function of the citric acid cycle. Also binds RNA; specifically to the 5'-untranslated leaders of mitochondrial mRNAs. This is Isocitrate dehydrogenase [NAD] subunit 1, mitochondrial (IDH1) from Saccharomyces cerevisiae (strain ATCC 204508 / S288c) (Baker's yeast).